We begin with the raw amino-acid sequence, 856 residues long: MDDDEIIPKKNHPSNERNKKKAILSHEDFTGEDSLMENHLELRDKLTEDIVTIKASLKNNLVCSTLNENEILALSNYMQFFVFKSGDMVIKQGEKGSYFFIINSGKFDVYVNDKKVKTLTKGSSFGEAALIHNTQRSATIKAGTNGTLWGVQRSTFRATLKQLSNRNFNENRSFIDSVSVFDMLTEAQKNMITNACVIQNFKPGETIVKQGDYGDVLYILKDGKATVYINDEEIRVLEKGSYFGERALLYDEPRSATIIAKEVTSCASICRKLLNVVLGNLQVVLFRNIMTEALQQSEIFKQISPDQLNDLADTAIVRDYPANYNILHKDKIKSVKYIIVLEGKVELFLDDESIGILTRGKSFGDQYVLNQKQKFKHTLKSLEVCKIALITESCLADCLGNNNIDASIDYNNKKSIIKKMYIFRYLTDKQCNLLIEAFKTTRYEEGDYIIQEGEVGSRFYIIKAGEVEIVKNNKRLRTLGKNDYFGERALIYDEPRTASVISTVNNLECWYVDKSVFLQIIEGPMLAHLEERIKMQDTKVEMSELLTERIIGRGTFGIVKLVLHEPTKIRYALKCVSKKSIIELNQQNNIKLEREITAENDHPFIIRLVRTFKDSKYFYFLTELVTGGELYDAIRKLGLLSRSQAQFYLGSIILAIEYLHERSIVYRDLKPENILLDKQGYVKLIDFGCAKKIHGRSYTLVGTPHYMAPEVILGKGYGCTVDIWAFGVCLYEFICGPLPFGNDQEDQLEIFRDILTGQLTFPDYVTDTDSINLIKRLLCRLPQGRIGCSINGFKDIKENSFFADFDWDRLAGRLLEPPLISKSETYAEDIDVKQIEQEEEDNANTEIDDENWDIDF.

The interval 1 to 33 (MDDDEIIPKKNHPSNERNKKKAILSHEDFTGED) is autoinhibitory segment. CNMP-binding domain regions lie at residues 62–177 (VCST…FIDS), 180–279 (VFDM…VVLG), 299–402 (IFKQ…LGNN), and 422–521 (IFRY…LQII). Positions 117, 126, 127, 129, 136, and 137 each coordinate 3',5'-cyclic GMP. Residues Arg477, Gly486, Glu487, Ala489, Arg496, and Thr497 each coordinate 3',5'-cyclic GMP. Positions 545–802 (LLTERIIGRG…FKDIKENSFF (258 aa)) constitute a Protein kinase domain. Residues 551 to 559 (IGRGTFGIV) and Lys574 contribute to the ATP site. Catalysis depends on Asp668, which acts as the Proton acceptor. Residues 803–856 (ADFDWDRLAGRLLEPPLISKSETYAEDIDVKQIEQEEEDNANTEIDDENWDIDF) enclose the AGC-kinase C-terminal domain. The interval 837 to 856 (QEEEDNANTEIDDENWDIDF) is disordered.

Belongs to the protein kinase superfamily. AGC Ser/Thr protein kinase family. cGMP subfamily. Monomer. Mg(2+) is required as a cofactor. Autophosphorylated.

The protein resides in the cytoplasm. Its subcellular location is the endoplasmic reticulum membrane. The catalysed reaction is L-seryl-[protein] + ATP = O-phospho-L-seryl-[protein] + ADP + H(+). It carries out the reaction L-threonyl-[protein] + ATP = O-phospho-L-threonyl-[protein] + ADP + H(+). With respect to regulation, activated by cGMP. Not activated by cAMP. cGMP binding allosterically triggers a conformational change at the alpha C-helix of cGMP-binding domain 4, which bridges the regulatory and catalytic domains, causing the capping triad, composed of Arg-488, Gln-536 and Asp-537, to form and stabilize the active conformation. The cGMP-binding domains acts cooperatively to activate PKG. In terms of biological role, serine/threonine protein kinase which acts as a downstream effector of the second messenger cGMP. Controls the release of Ca(2+) from intracellular stores by regulating phosphoinositide biosynthesis. Ca(2+) signals are essential for merozoite and sporozoite invasion and egress from host hepatocytes and erythrocytes, and, in the mosquito vector, for gametocyte activation, and ookinete and sporozoite motility. During the host liver stage, regulates the initial invasion of host hepatocytes by sporozoites by regulating sporozoite motility and microneme exocytosis. Following parasite development in the hepatocytes, required for the release of merosomes, a vesicle containing the mature merozoites. During the asexual blood stage, required for the progression from schizont to the ring stage following merozoite invasion of host erythrocytes and for merozoite egress. Regulates merozoite egress by promoting the release of exonemes and micronemes which contain proteins essential for egress. Phosphorylates CDPK1 predominantly at the late schizont stage; phosphorylation at 'Ser-64' regulates CDPK1 protein-protein interaction and phosphorylation at 'Thr-231' may regulate CDPK1 kinase activity. In the mosquito vector, required for the initiation of gametogenesis induced by xanthurenic acid, specifically the gametocyte differentiation from the crescent-shaped form to the spherical form. Required for the gliding motility of ookinetes to reach and penetrate the midgut epithelium by promoting Ca(2+)-mediated activation of CDPK1 and CDPK4. Also required for microneme secretion in ookinete by promoting Ca(2+)-mediated activation of CDPK3. In Plasmodium berghei (strain Anka), this protein is cGMP-dependent protein kinase.